Here is a 197-residue protein sequence, read N- to C-terminus: MSLSIDVTSLPSISSSIFKNESSSTTSTLSGKSIGRSEQYISPDAEAFNKYMLSKSPEDIGPSDSASNDPLTSFSIRSNAVKTNADAGVSMDSSTQSRPSSNVGCDQVDFSLTKGINVSANLDSCVSISTDNKKEKSKKDKSRKHYPRIEADSDSEDYVLDDSDSDDGKCKNCKYKKRCFALRVRMKQVAMQLIEDL.

Low complexity predominate over residues isoleucine 17–serine 30. Disordered stretches follow at residues isoleucine 17–serine 37, leucine 53–threonine 72, alanine 85–glycine 104, and serine 129–aspartate 166. Serine 67 carries the post-translational modification Phosphoserine; by host CK1. Polar residues predominate over residues methionine 91–glycine 104. Mg(2+) is bound at residue aspartate 92. The segment covering aspartate 152–serine 165 has biased composition (acidic residues). Phosphoserine; by host occurs at positions 153, 155, 163, and 165.

This sequence belongs to the rotavirus NSP5 family. As to quaternary structure, homodimer. Interacts with VP1. Interacts with VP2. Interacts with NSP2; this interaction leads to up-regulation of NSP5 hyperphosphorylation and formation of virus factories. Interacts with NSP6. Participates in the selective exclusion of host proteins from stress granules (SG) and P bodies (PB). Also participates in the sequestration of these remodeled organelles in viral factories. Requires Mg(2+) as cofactor. Post-translationally, O-glycosylated. In terms of processing, hyperphosphorylated on serine residues, when in dimeric form. Phosphorylation by host CK1 is required for the hyperphosphorylation of NSP5 dimer.

It is found in the host cytoplasm. In terms of biological role, plays an essential role in the viral genome replication. Participates, together with NSP2, in the formation of viral factories (viroplasms), which are large inclusions in the host cytoplasm where replication intermediates are assembled and viral RNA replication takes place. Orchestrates the recruitment of viroplasmic proteins such as capsid proteins to these factories. Participates in the selective exclusion of host proteins from stress granules (SG) and P bodies (PB). Also participates in the sequestration of these remodeled organelles in viral factories. This Rotavirus A (strain RVA/Pig/United States/OSU/1977/G5P9[7]) (RV-A) protein is Non-structural protein 5.